Here is a 590-residue protein sequence, read N- to C-terminus: Muscarinic acetylcholine receptor M3 (590 aa).

The Extracellular portion of the chain corresponds to 1 to 67 (MTLHNNSTTS…DPLGGHTVWQ (67 aa)). Residues N5, N6, N15, N41, and N48 are each glycosylated (N-linked (GlcNAc...) asparagine). Residues 68-91 (VVFIAFLTGILALVTIIGNILVIV) traverse the membrane as a helical segment. The Cytoplasmic segment spans residues 92–104 (SFKVNKQLKTVNN). A helical transmembrane segment spans residues 105–130 (YFLLSLACADLIIGVISMNLFTTYII). At 131 to 142 (MNRWALGNLACD) the chain is on the extracellular side. A disulfide bridge links C141 with C221. Residues 143–164 (LWLAIDYVASNASVMNLLVISF) form a helical membrane-spanning segment. Topologically, residues 165–184 (DRYFSITRPLTYRAKRTTKR) are cytoplasmic. A helical transmembrane segment spans residues 185 to 206 (AGVMIGLAWVISFVLWAPAILF). Residues 207 to 229 (WQYFVGKRTVPPGECFIQFLSEP) lie on the Extracellular side of the membrane. Residues 230 to 252 (TITFGTAIAAFYMPVTIMTILYW) form a helical membrane-spanning segment. The Cytoplasmic segment spans residues 253–491 (RIYKETEKRT…SLVKEKKAAQ (239 aa)). The Basolateral sorting signal motif lies at 275 to 281 (AETENFV). A disordered region spans residues 323 to 357 (SSEQMDQDHSSSDSWNNNDAAASLENSASSDEEDI). Residues 334 to 345 (SDSWNNNDAAAS) are compositionally biased toward low complexity. At S385 the chain carries Phosphoserine. Residues 492–514 (TLSAILLAFIITWTPYNIMVLVN) form a helical membrane-spanning segment. The Extracellular portion of the chain corresponds to 515-526 (TFCDSCIPKTFW). Residues C517 and C520 are joined by a disulfide bond. Residues 527–546 (NLGYWLCYINSTVNPVCYAL) traverse the membrane as a helical segment. Topologically, residues 547–590 (CNKTFRTTFKMLLLCQCGKKKRRKQQYQQRQSVIFHKRAPEQAL) are cytoplasmic.

The protein belongs to the G-protein coupled receptor 1 family. Muscarinic acetylcholine receptor subfamily. CHRM3 sub-subfamily. In terms of assembly, homodimer; the dimers can form tetramers. Interacts with NALCN. Interacts with TMEM147.

Its subcellular location is the cell membrane. The protein resides in the postsynaptic cell membrane. It is found in the basolateral cell membrane. It localises to the endoplasmic reticulum membrane. In terms of biological role, the muscarinic acetylcholine receptor mediates various cellular responses, including inhibition of adenylate cyclase, breakdown of phosphoinositides and modulation of potassium channels through the action of G proteins. Primary transducing effect is Pi turnover. The protein is Muscarinic acetylcholine receptor M3 (CHRM3) of Gorilla gorilla gorilla (Western lowland gorilla).